Here is a 443-residue protein sequence, read N- to C-terminus: dTDP-4-dehydro-6-deoxy-alpha-D-glucopyranose 2,3-dehydratase (443 aa).

DTDP-4-dehydro-6-deoxy-alpha-D-glucose contacts are provided by residues Trp35, 118–122 (TFSNY), Ser157, Trp260, Arg325, 341–343 (QCN), 346–347 (NL), and 377–380 (EGGR).

This sequence belongs to the hexose 2,3-dehydratase family. Homodimer.

The catalysed reaction is dTDP-4-dehydro-6-deoxy-alpha-D-glucose = dTDP-3,4-didehydro-2,6-dideoxy-alpha-D-glucose + H2O. Its pathway is antibiotic biosynthesis; granaticin biosynthesis. Functionally, involved in the biosynthesis of the 2,6-deoxysugar, dTDP-L-rhodinose, attached to the benzoisochromane quinone chromophore to produce the aglycone antibiotics granaticin and granaticin B. Catalyzes the removal of the hydroxyl group at position C-2 of the hexose ring of dTDP-4-dehydro-6-deoxy-alpha-D-glucopyranose, and the oxidation of the hydroxyl group at position C-3 to form a carbonyl functionality. The product of the reaction, dTDP-2,6-dideoxy-D-glycero-hex-2-enos-4-ulose, is a highly unstable diketosugar, which spontaneously forms dTDP-3,4-didehydro-2,6-dideoxy-alpha-D-glucose. The chain is dTDP-4-dehydro-6-deoxy-alpha-D-glucopyranose 2,3-dehydratase from Streptomyces violaceoruber.